We begin with the raw amino-acid sequence, 117 residues long: Large ribosomal subunit protein bL20 (117 aa).

Belongs to the bacterial ribosomal protein bL20 family.

Its function is as follows. Binds directly to 23S ribosomal RNA and is necessary for the in vitro assembly process of the 50S ribosomal subunit. It is not involved in the protein synthesizing functions of that subunit. The protein is Large ribosomal subunit protein bL20 of Rickettsia akari (strain Hartford).